Reading from the N-terminus, the 132-residue chain is Small ribosomal subunit protein eS24 (132 aa).

Residues 91–132 (LATHGLYEKKKTSRKQRTERQNRMKKVRSIKKASVGAAGKKN) are disordered. A compositionally biased stretch (basic and acidic residues) spans 96-112 (LYEKKKTSRKQRTERQN).

It belongs to the eukaryotic ribosomal protein eS24 family. Component of the small ribosomal subunit.

It localises to the cytoplasm. Its function is as follows. Component of the small ribosomal subunit. The ribosome is a large ribonucleoprotein complex responsible for the synthesis of proteins in the cell. Required for processing of pre-rRNA and maturation of 40S ribosomal subunits. The polypeptide is Small ribosomal subunit protein eS24 (rps24) (Oryzias latipes (Japanese rice fish)).